The primary structure comprises 70 residues: Cytochrome c oxidase subunit 8B, mitochondrial (70 aa).

The transit peptide at 1–24 directs the protein to the mitochondrion; the sequence is MSRLAPPLRLLQAPLKCWAVPKAH. At 25-35 the chain is on the mitochondrial matrix side; that stretch reads VSAKPARTPTS. Residues 36–59 form a helical membrane-spanning segment; sequence PMEQAVGLSVMFVSFLVPSGWVLS. Topologically, residues 60–70 are mitochondrial intermembrane; it reads HLESYKKSSTT.

The protein belongs to the cytochrome c oxidase VIII family. As to quaternary structure, component of the cytochrome c oxidase (complex IV, CIV), a multisubunit enzyme composed of 14 subunits. The complex is composed of a catalytic core of 3 subunits MT-CO1, MT-CO2 and MT-CO3, encoded in the mitochondrial DNA, and 11 supernumerary subunits COX4I, COX5A, COX5B, COX6A, COX6B, COX6C, COX7A, COX7B, COX7C, COX8 and NDUFA4, which are encoded in the nuclear genome. The complex exists as a monomer or a dimer and forms supercomplexes (SCs) in the inner mitochondrial membrane with NADH-ubiquinone oxidoreductase (complex I, CI) and ubiquinol-cytochrome c oxidoreductase (cytochrome b-c1 complex, complex III, CIII), resulting in different assemblies (supercomplex SCI(1)III(2)IV(1) and megacomplex MCI(2)III(2)IV(2)).

Its subcellular location is the mitochondrion inner membrane. It functions in the pathway energy metabolism; oxidative phosphorylation. In terms of biological role, component of the cytochrome c oxidase, the last enzyme in the mitochondrial electron transport chain which drives oxidative phosphorylation. The respiratory chain contains 3 multisubunit complexes succinate dehydrogenase (complex II, CII), ubiquinol-cytochrome c oxidoreductase (cytochrome b-c1 complex, complex III, CIII) and cytochrome c oxidase (complex IV, CIV), that cooperate to transfer electrons derived from NADH and succinate to molecular oxygen, creating an electrochemical gradient over the inner membrane that drives transmembrane transport and the ATP synthase. Cytochrome c oxidase is the component of the respiratory chain that catalyzes the reduction of oxygen to water. Electrons originating from reduced cytochrome c in the intermembrane space (IMS) are transferred via the dinuclear copper A center (CU(A)) of subunit 2 and heme A of subunit 1 to the active site in subunit 1, a binuclear center (BNC) formed by heme A3 and copper B (CU(B)). The BNC reduces molecular oxygen to 2 water molecules using 4 electrons from cytochrome c in the IMS and 4 protons from the mitochondrial matrix. This Carlito syrichta (Philippine tarsier) protein is Cytochrome c oxidase subunit 8B, mitochondrial (COX8B).